Reading from the N-terminus, the 422-residue chain is Protein FAM53B (422 aa).

6 positions are modified to phosphoserine: S118, S167, S169, S179, S212, and S268. Residues 245 to 268 show a composition bias toward low complexity; that stretch reads SANSTPASTPELARRSSGLSRSRS. The disordered stretch occupies residues 245 to 269; the sequence is SANSTPASTPELARRSSGLSRSRSQ. A Nuclear localization signal motif is present at residues 281 to 284; it reads KRRR.

Belongs to the FAM53 family. Interacts with CTNNB1. In terms of tissue distribution, detected in skeletal muscle, kidney, spleen, thyroid, testis, ovary, small intestine, colon and peripheral blood.

The protein localises to the nucleus. In terms of biological role, acts as a regulator of Wnt signaling pathway by regulating beta-catenin (CTNNB1) nuclear localization. This chain is Protein FAM53B, found in Homo sapiens (Human).